The chain runs to 145 residues: Large ribosomal subunit protein uL11 (145 aa).

This sequence belongs to the universal ribosomal protein uL11 family. In terms of assembly, part of the ribosomal stalk of the 50S ribosomal subunit. Interacts with L10 and the large rRNA to form the base of the stalk. L10 forms an elongated spine to which L12 dimers bind in a sequential fashion forming a multimeric L10(L12)X complex. Post-translationally, one or more lysine residues are methylated.

Functionally, forms part of the ribosomal stalk which helps the ribosome interact with GTP-bound translation factors. The protein is Large ribosomal subunit protein uL11 of Sulfurihydrogenibium sp. (strain YO3AOP1).